We begin with the raw amino-acid sequence, 476 residues long: Eukaryotic translation initiation factor 3 subunit L (476 aa).

Residues 257-452 (DAIRMFSHIL…DLDYALENDL (196 aa)) form the PCI domain.

This sequence belongs to the eIF-3 subunit L family. Component of the eukaryotic translation initiation factor 3 (eIF-3) complex.

The protein localises to the cytoplasm. Component of the eukaryotic translation initiation factor 3 (eIF-3) complex, which is involved in protein synthesis of a specialized repertoire of mRNAs and, together with other initiation factors, stimulates binding of mRNA and methionyl-tRNAi to the 40S ribosome. The eIF-3 complex specifically targets and initiates translation of a subset of mRNAs involved in cell proliferation. This Aspergillus clavatus (strain ATCC 1007 / CBS 513.65 / DSM 816 / NCTC 3887 / NRRL 1 / QM 1276 / 107) protein is Eukaryotic translation initiation factor 3 subunit L.